The sequence spans 437 residues: Phosphoribosylamine--glycine ligase (437 aa).

Residues 110-322 enclose the ATP-grasp domain; it reads KNLLRSADIP…LVEVMQAVVD (213 aa). Position 142 to 203 (142 to 203) interacts with ATP; the sequence is EPTDPVNVVV…EERLTGPEVS (62 aa). The Mg(2+) site is built by E292 and N294.

It belongs to the GARS family. It depends on Mg(2+) as a cofactor. The cofactor is Mn(2+).

It catalyses the reaction 5-phospho-beta-D-ribosylamine + glycine + ATP = N(1)-(5-phospho-beta-D-ribosyl)glycinamide + ADP + phosphate + H(+). It participates in purine metabolism; IMP biosynthesis via de novo pathway; N(1)-(5-phospho-D-ribosyl)glycinamide from 5-phospho-alpha-D-ribose 1-diphosphate: step 2/2. In Rhodopirellula baltica (strain DSM 10527 / NCIMB 13988 / SH1), this protein is Phosphoribosylamine--glycine ligase.